The primary structure comprises 618 residues: Chaperone protein HscA homolog (618 aa).

The protein belongs to the heat shock protein 70 family.

Its function is as follows. Chaperone involved in the maturation of iron-sulfur cluster-containing proteins. Has a low intrinsic ATPase activity which is markedly stimulated by HscB. This is Chaperone protein HscA homolog from Variovorax paradoxus (strain S110).